We begin with the raw amino-acid sequence, 360 residues long: Mannan endo-1,4-beta-mannosidase (360 aa).

The signal sequence occupies residues 1-24 (MLKKLAVCLSIVLLLLGAASPISA). A GH26 domain is found at 36-347 (QTTKDIMNWL…YQNSWTLNKG (312 aa)). H129 lines the substrate pocket. E191 (proton donor) is an active-site residue. W196 and Y266 together coordinate substrate. The Nucleophile role is filled by E290.

Belongs to the glycosyl hydrolase 26 family. Homodimer.

Its subcellular location is the secreted. It catalyses the reaction Random hydrolysis of (1-&gt;4)-beta-D-mannosidic linkages in mannans, galactomannans and glucomannans.. Involved in the degradation of glucomannan. Catalyzes the endo hydrolysis of beta-1,4-linked mannan, galactomannan and glucomannan. This is Mannan endo-1,4-beta-mannosidase from Bacillus subtilis.